The primary structure comprises 162 residues: MSAPRKVRLPSVKAVDMSMEDMAARLARLESENKALKQQVLRGGACASSTSVPSAPVPPPEPLTARQREVMITQATGRLASQAMKKIEDKVRKSVDGVTTRNEMENILQNLTLRIQVSMLGAKGQPSPGEGTRPRESNDPNATRRARSRSRGREAKKVQISD.

A coiled-coil region spans residues 12–43; it reads VKAVDMSMEDMAARLARLESENKALKQQVLRG. Positions 118–162 are disordered; it reads SMLGAKGQPSPGEGTRPRESNDPNATRRARSRSRGREAKKVQISD. Basic and acidic residues predominate over residues 151–162; it reads RGREAKKVQISD.

The protein belongs to the herpesviridae BLRF2 family. In terms of assembly, homooligomer; homooligomerizes and binds double-stranded DNA (dsDNA) cooperatively. Interacts with host CGAS.

The protein localises to the virion tegument. It localises to the host cytoplasm. Its function is as follows. Plays a role in the inhibition of host innate immune system by targeting the CGAS enzymatic activity which is the principal cytosolic DNA sensor that detects invading viral DNA. Acts by inhibiting CGAS-DNA phase separation: directly binds double-stranded DNA (dsDNA) in a length dependent but sequence independent manner and is able to form DNA-induced phase separation in infected cells. DNA phase separation of ORF52 mediates disruption of liquid-like droplets in which CGAS is activated, thereby preventing CGAS activity. The chain is Tegument protein BLRF2 from Homo sapiens (Human).